A 364-amino-acid polypeptide reads, in one-letter code: UDP-3-O-acylglucosamine N-acyltransferase (364 aa).

H257 (proton acceptor) is an active-site residue.

The protein belongs to the transferase hexapeptide repeat family. LpxD subfamily. Homotrimer.

The enzyme catalyses a UDP-3-O-[(3R)-3-hydroxyacyl]-alpha-D-glucosamine + a (3R)-hydroxyacyl-[ACP] = a UDP-2-N,3-O-bis[(3R)-3-hydroxyacyl]-alpha-D-glucosamine + holo-[ACP] + H(+). It functions in the pathway bacterial outer membrane biogenesis; LPS lipid A biosynthesis. Its function is as follows. Catalyzes the N-acylation of UDP-3-O-acylglucosamine using 3-hydroxyacyl-ACP as the acyl donor. Is involved in the biosynthesis of lipid A, a phosphorylated glycolipid that anchors the lipopolysaccharide to the outer membrane of the cell. The polypeptide is UDP-3-O-acylglucosamine N-acyltransferase (Paracoccus denitrificans (strain Pd 1222)).